The primary structure comprises 515 residues: Histidine ammonia-lyase (515 aa).

The 5-imidazolinone (Ala-Gly) cross-link spans 148-150; that stretch reads ASG. Ser149 is subject to 2,3-didehydroalanine (Ser).

The protein belongs to the PAL/histidase family. Contains an active site 4-methylidene-imidazol-5-one (MIO), which is formed autocatalytically by cyclization and dehydration of residues Ala-Ser-Gly.

The protein localises to the cytoplasm. It carries out the reaction L-histidine = trans-urocanate + NH4(+). Its pathway is amino-acid degradation; L-histidine degradation into L-glutamate; N-formimidoyl-L-glutamate from L-histidine: step 1/3. This chain is Histidine ammonia-lyase, found in Pseudomonas syringae pv. tomato (strain ATCC BAA-871 / DC3000).